Here is a 335-residue protein sequence, read N- to C-terminus: Spliceosome-associated protein 49 (335 aa).

RRM domains lie at 13–84 (IYLG…PIRV) and 101–172 (LFVG…PITV). The interval 204 to 223 (VTPQSTLPPGFSPATPAPTS) is disordered.

It belongs to the SF3B4 family.

Its subcellular location is the nucleus. The polypeptide is Spliceosome-associated protein 49 (sap49) (Schizosaccharomyces pombe (strain 972 / ATCC 24843) (Fission yeast)).